The chain runs to 370 residues: ATP synthase gamma chain, chloroplastic (370 aa).

A chloroplast-targeting transit peptide spans 1–54 (MRSFCIAALLAVASAFTTQPTSFTVKTANVGERASGVFPEQSSAHRTRKATIVM). Residue Cys-145 is part of the active site.

It belongs to the ATPase gamma chain family. F-type ATPases have 2 components, CF(1) - the catalytic core - and CF(0) - the membrane proton channel. CF(1) has five subunits: alpha(3), beta(3), gamma(1), delta(1), epsilon(1). CF(0) has four main subunits: a, b, b' and c.

It localises to the plastid. The protein resides in the chloroplast thylakoid membrane. Its function is as follows. Produces ATP from ADP in the presence of a proton gradient across the membrane. The gamma chain is believed to be important in regulating ATPase activity and the flow of protons through the CF(0) complex. In Phaeodactylum tricornutum (Diatom), this protein is ATP synthase gamma chain, chloroplastic (ATPC).